The sequence spans 426 residues: Pistil-specific extensin-like protein (426 aa).

The first 23 residues, 1–23 (MAVIISSKVLLIQLFVLVLGSFS), serve as a signal peptide directing secretion. 2 disordered regions span residues 56 to 109 (GPTF…GSKL) and 121 to 254 (NLPD…AAEP). Pro residues-rich tracts occupy residues 60-94 (VLPPPSPLPSPPPPSPSPPPPSPSPPPPSTIPLIP), 123-161 (PDVPPIGGGPPVNQPKPSSPSPLVKPPPPPPSPCKPSPP), 168-224 (PPQP…PPPP), and 231-254 (LLPPPPPVAYPPVMTPSPSPAAEP). Tandem repeats lie at residues 69-73 (SPPPP), 76-80 (SPPPP), and 83-87 (SPPPP). The interval 69 to 182 (SPPPPSPSPP…PAKQPSPPPP (114 aa)) is 4 X 5 AA repeats of S-P(4). Repeat unit 4 spans residues 178 to 182 (SPPPP). Residue asparagine 310 is glycosylated (N-linked (GlcNAc...) asparagine).

In terms of tissue distribution, pistil (stigma and style tissue).

This Nicotiana tabacum (Common tobacco) protein is Pistil-specific extensin-like protein.